Consider the following 252-residue polypeptide: NLP effector protein Pc118356 (252 aa).

An N-terminal signal peptide occupies residues 1–17; it reads MALTVLAATALTALIMG. N-linked (GlcNAc...) asparagine glycosylation is found at Asn-20 and Asn-67. The Hepta-peptide GHRHDWE motif signature appears at 121–127; sequence QDRHFWE. N-linked (GlcNAc...) asparagine glycosylation occurs at Asn-166.

It belongs to the Necrosis inducing protein (NPP1) family.

It localises to the secreted. In terms of biological role, secreted effector that contributes strongly to virulence during infection by P.capsici. The polypeptide is NLP effector protein Pc118356 (Phytophthora capsici).